A 280-amino-acid chain; its full sequence is Lipase chaperone (280 aa).

Residues 5–22 traverse the membrane as a helical segment; sequence ALTIITIASGSLGAVYFL.

Belongs to the lipase chaperone family.

It is found in the cell inner membrane. Functionally, may be involved in the folding of the extracellular lipase during its passage through the periplasm. This chain is Lipase chaperone (lifO), found in Vibrio vulnificus (strain YJ016).